Consider the following 100-residue polypeptide: Small ribosomal subunit protein uS14c (100 aa).

This sequence belongs to the universal ribosomal protein uS14 family. In terms of assembly, part of the 30S ribosomal subunit.

The protein resides in the plastid. The protein localises to the chloroplast. In terms of biological role, binds 16S rRNA, required for the assembly of 30S particles. The sequence is that of Small ribosomal subunit protein uS14c from Crucihimalaya wallichii (Rock-cress).